Here is a 309-residue protein sequence, read N- to C-terminus: MKANAFGKVAVMLGGTSAERDVSLKSGMAVLKGLVAKGIDAHAFDPAAHSLQELVEQKFDRVFIALHGRGGEDGSMQGALQILEMPYTGSDVLGCALGMDKVRCKQIWHSVGLPTANWRVVTQAEIEQVNVEAMLQELGGRVIVKPAREGSSIGMSIADNGRSLALALQHAAEFDDDLLVEQWVEGAEYTIGILEGKALPVIRLQTPHEFYDFEAKYQANDTQYHCPAGLSDDDEASLRTLAERAFAAIGGSGWGRIDVMRNNAGEWFLLEANTVPGMTEKSLVPMAAKVAGLQFNDLVERILAQTLER.

Residues 105 to 304 (KQIWHSVGLP…FNDLVERILA (200 aa)) form the ATP-grasp domain. 135-190 (LQELGGRVIVKPAREGSSIGMSIADNGRSLALALQHAAEFDDDLLVEQWVEGAEYT) contributes to the ATP binding site. Positions 258, 271, and 273 each coordinate Mg(2+).

Belongs to the D-alanine--D-alanine ligase family. It depends on Mg(2+) as a cofactor. Mn(2+) serves as cofactor.

Its subcellular location is the cytoplasm. It carries out the reaction 2 D-alanine + ATP = D-alanyl-D-alanine + ADP + phosphate + H(+). It participates in cell wall biogenesis; peptidoglycan biosynthesis. In terms of biological role, cell wall formation. The sequence is that of D-alanine--D-alanine ligase from Idiomarina loihiensis (strain ATCC BAA-735 / DSM 15497 / L2-TR).